The sequence spans 285 residues: Geranyl diphosphate 2-C-methyltransferase (285 aa).

It belongs to the geranyl diphosphate 2-C-methyltransferase family. It depends on Mg(2+) as a cofactor.

The catalysed reaction is (2E)-geranyl diphosphate + S-adenosyl-L-methionine = (E)-2-methylgeranyl diphosphate + S-adenosyl-L-homocysteine + H(+). Its function is as follows. Catalyzes the SAM-dependent methylation of geranyl diphosphate (GPP) to yield (E)-2-methylgeranyl diphosphate (2-MeGPP). The polypeptide is Geranyl diphosphate 2-C-methyltransferase (Saccharopolyspora erythraea (strain ATCC 11635 / DSM 40517 / JCM 4748 / NBRC 13426 / NCIMB 8594 / NRRL 2338)).